A 1158-amino-acid chain; its full sequence is ATP-dependent helicase/deoxyribonuclease subunit B (1158 aa).

Residues Met1–Asn275 enclose the UvrD-like helicase ATP-binding domain. Gly8–Ser15 is a binding site for ATP. The 315-residue stretch at Asn269–Val583 folds into the UvrD-like helicase C-terminal domain. The [4Fe-4S] cluster site is built by Cys784, Cys1112, Cys1115, and Cys1121.

Belongs to the helicase family. AddB/RexB type 1 subfamily. In terms of assembly, heterodimer of AddA and AddB. It depends on Mg(2+) as a cofactor. Requires [4Fe-4S] cluster as cofactor.

In terms of biological role, the heterodimer acts as both an ATP-dependent DNA helicase and an ATP-dependent, dual-direction single-stranded exonuclease. Recognizes the chi site generating a DNA molecule suitable for the initiation of homologous recombination. The AddB subunit has 5' -&gt; 3' nuclease activity but not helicase activity. The protein is ATP-dependent helicase/deoxyribonuclease subunit B of Staphylococcus aureus (strain COL).